The sequence spans 474 residues: Pyruvate kinase (474 aa).

Arg-32 provides a ligand contact to substrate. 3 residues coordinate K(+): Asn-34, Ser-36, and Asp-66. 34–37 (NFSH) contributes to the ATP binding site. ATP is bound by residues Arg-73 and Lys-155. Glu-221 provides a ligand contact to Mg(2+). The substrate site is built by Gly-244, Asp-245, and Thr-277. Mg(2+) is bound at residue Asp-245.

The protein belongs to the pyruvate kinase family. As to quaternary structure, homotetramer. It depends on Mg(2+) as a cofactor. K(+) is required as a cofactor.

It catalyses the reaction pyruvate + ATP = phosphoenolpyruvate + ADP + H(+). It functions in the pathway carbohydrate degradation; glycolysis; pyruvate from D-glyceraldehyde 3-phosphate: step 5/5. The protein is Pyruvate kinase (pykF) of Clostridium perfringens (strain 13 / Type A).